The chain runs to 384 residues: PqqA peptide cyclase (384 aa).

One can recognise a Radical SAM core domain in the interval Pro15 to Glu231. [4Fe-4S] cluster-binding residues include Cys29, Cys33, and Cys36.

It belongs to the radical SAM superfamily. PqqE family. In terms of assembly, interacts with PqqD. The interaction is necessary for activity of PqqE. It depends on [4Fe-4S] cluster as a cofactor.

It catalyses the reaction [PQQ precursor protein] + S-adenosyl-L-methionine = E-Y cross-linked-[PQQ precursor protein] + 5'-deoxyadenosine + L-methionine + H(+). The protein operates within cofactor biosynthesis; pyrroloquinoline quinone biosynthesis. Catalyzes the cross-linking of a glutamate residue and a tyrosine residue in the PqqA protein as part of the biosynthesis of pyrroloquinoline quinone (PQQ). The chain is PqqA peptide cyclase from Ectopseudomonas mendocina (strain ymp) (Pseudomonas mendocina).